Consider the following 337-residue polypeptide: RNA 3'-terminal phosphate cyclase (337 aa).

ATP is bound by residues Gln100 and 281 to 285; that span reads YMGDQ. His306 serves as the catalytic Tele-AMP-histidine intermediate.

This sequence belongs to the RNA 3'-terminal cyclase family. Type 1 subfamily.

The protein resides in the cytoplasm. It carries out the reaction a 3'-end 3'-phospho-ribonucleotide-RNA + ATP = a 3'-end 2',3'-cyclophospho-ribonucleotide-RNA + AMP + diphosphate. Functionally, catalyzes the conversion of 3'-phosphate to a 2',3'-cyclic phosphodiester at the end of RNA. The mechanism of action of the enzyme occurs in 3 steps: (A) adenylation of the enzyme by ATP; (B) transfer of adenylate to an RNA-N3'P to produce RNA-N3'PP5'A; (C) and attack of the adjacent 2'-hydroxyl on the 3'-phosphorus in the diester linkage to produce the cyclic end product. The biological role of this enzyme is unknown but it is likely to function in some aspects of cellular RNA processing. This is RNA 3'-terminal phosphate cyclase (rtcA) from Methanothermobacter thermautotrophicus (strain ATCC 29096 / DSM 1053 / JCM 10044 / NBRC 100330 / Delta H) (Methanobacterium thermoautotrophicum).